Consider the following 80-residue polypeptide: Large ribosomal subunit protein bL31B (80 aa).

The protein belongs to the bacterial ribosomal protein bL31 family. Type B subfamily. In terms of assembly, part of the 50S ribosomal subunit.

This chain is Large ribosomal subunit protein bL31B, found in Streptococcus mutans serotype c (strain ATCC 700610 / UA159).